The chain runs to 549 residues: Probable protein kinase UbiB (549 aa).

The Protein kinase domain maps to 123–501 (DFDETPLASA…QQQAHKSNYL (379 aa)). Residues 129–137 (LASASISQV) and Lys-152 each bind ATP. Asp-287 acts as the Proton acceptor in catalysis. 2 consecutive transmembrane segments (helical) span residues 498-518 (SNYLLITSAILLICGTLLFNQ) and 520-540 (ATLWSPYVCLISGAVLWIIGW).

Belongs to the ABC1 family. UbiB subfamily.

The protein localises to the cell inner membrane. It functions in the pathway cofactor biosynthesis; ubiquinone biosynthesis [regulation]. Is probably a protein kinase regulator of UbiI activity which is involved in aerobic coenzyme Q (ubiquinone) biosynthesis. This is Probable protein kinase UbiB from Shewanella sp. (strain ANA-3).